Here is a 180-residue protein sequence, read N- to C-terminus: UPF0227 protein PC1_2487 (180 aa).

The protein belongs to the UPF0227 family.

In Pectobacterium carotovorum subsp. carotovorum (strain PC1), this protein is UPF0227 protein PC1_2487.